We begin with the raw amino-acid sequence, 949 residues long: Bifunctional uridylyltransferase/uridylyl-removing enzyme (949 aa).

The uridylyltransferase stretch occupies residues 1–377; that stretch reads MARHETSFPE…RFRNRVRKIP (377 aa). The segment at 378–733 is uridylyl-removing; the sequence is GTLDFVDDGG…VRTHDFHAIT (356 aa). An HD domain is found at 494–610; that stretch reads VDEHLLRAVD…VDFAERVQSL (117 aa). ACT domains are found at residues 734 to 815 and 845 to 926; these read EITV…DVIA and VIEV…ERMP. The interval 925 to 949 is disordered; sequence MPSGIIAPTPVPRASHGSKATKAET.

Belongs to the GlnD family. Requires Mg(2+) as cofactor.

The enzyme catalyses [protein-PII]-L-tyrosine + UTP = [protein-PII]-uridylyl-L-tyrosine + diphosphate. The catalysed reaction is [protein-PII]-uridylyl-L-tyrosine + H2O = [protein-PII]-L-tyrosine + UMP + H(+). Its activity is regulated as follows. Uridylyltransferase (UTase) activity is inhibited by glutamine, while glutamine activates uridylyl-removing (UR) activity. In terms of biological role, modifies, by uridylylation and deuridylylation, the PII regulatory proteins (GlnB and homologs), in response to the nitrogen status of the cell that GlnD senses through the glutamine level. Under low glutamine levels, catalyzes the conversion of the PII proteins and UTP to PII-UMP and PPi, while under higher glutamine levels, GlnD hydrolyzes PII-UMP to PII and UMP (deuridylylation). Thus, controls uridylylation state and activity of the PII proteins, and plays an important role in the regulation of nitrogen fixation and metabolism. The protein is Bifunctional uridylyltransferase/uridylyl-removing enzyme of Sinorhizobium medicae (strain WSM419) (Ensifer medicae).